Reading from the N-terminus, the 240-residue chain is MKEDSTMTYLTQKEAQEIDAELMGPKYGYTLAQLMELAGLACAQALHKVYGPERYPRVLVCCGPGNQGGDGLVAARHLWHFGHKPTLYYPKQTDKEHYKSLLRQCETLGIPVIGANFSEAVGETDVILDAIFGFSFHSEPRAPFDEPIRSFQQTQTPIVSVDIPSGWDVETGNPNHVYFTPNVLVSLTAPKRGVKSFPGRHFLGGRFIPPGIVKSYNLKLPCYPSSDQVVEITAVQGEDK.

A YjeF N-terminal domain is found at alanine 15–proline 224. Asparagine 66–aspartate 70 provides a ligand contact to (6S)-NADPHX. Positions 67 and 129 each coordinate K(+). (6S)-NADPHX contacts are provided by residues glycine 133 to glutamate 139 and aspartate 162. A K(+)-binding site is contributed by serine 165.

Belongs to the NnrE/AIBP family. Requires K(+) as cofactor.

The protein resides in the cytoplasm. Its subcellular location is the mitochondrion. The catalysed reaction is (6R)-NADHX = (6S)-NADHX. It carries out the reaction (6R)-NADPHX = (6S)-NADPHX. Catalyzes the epimerization of the S- and R-forms of NAD(P)HX, a damaged form of NAD(P)H that is a result of enzymatic or heat-dependent hydration. This is a prerequisite for the S-specific NAD(P)H-hydrate dehydratase to allow the repair of both epimers of NAD(P)HX. This is NAD(P)H-hydrate epimerase from Puccinia graminis f. sp. tritici (strain CRL 75-36-700-3 / race SCCL) (Black stem rust fungus).